A 276-amino-acid chain; its full sequence is Phosphatidylglycerol--prolipoprotein diacylglyceryl transferase (276 aa).

The next 3 membrane-spanning stretches (helical) occupy residues 17-37 (LAIHWYGLTYLAAFGLFFFLA), 63-83 (ILFLGVMGVVIGGRLGYCLFY), and 95-115 (ILAVWQGGMSFHGGMLGVLAS). R146 lines the a 1,2-diacyl-sn-glycero-3-phospho-(1'-sn-glycerol) pocket. The next 3 helical transmembrane spans lie at 182-202 (SQVYQFLLEGLLLFVLLWLYA), 209-229 (GQVSGAFLVGYGVFRFIAEYF), and 235-255 (FLGILALGLSMGQWLCVPMIV).

It belongs to the Lgt family.

It localises to the cell inner membrane. The catalysed reaction is L-cysteinyl-[prolipoprotein] + a 1,2-diacyl-sn-glycero-3-phospho-(1'-sn-glycerol) = an S-1,2-diacyl-sn-glyceryl-L-cysteinyl-[prolipoprotein] + sn-glycerol 1-phosphate + H(+). Its pathway is protein modification; lipoprotein biosynthesis (diacylglyceryl transfer). Functionally, catalyzes the transfer of the diacylglyceryl group from phosphatidylglycerol to the sulfhydryl group of the N-terminal cysteine of a prolipoprotein, the first step in the formation of mature lipoproteins. The sequence is that of Phosphatidylglycerol--prolipoprotein diacylglyceryl transferase from Polaromonas sp. (strain JS666 / ATCC BAA-500).